Reading from the N-terminus, the 352-residue chain is Rhodopsin (352 aa).

At 1–36 the chain is on the extracellular side; the sequence is MNGTEGPFFYIPMVNTTGIVRSPYEYPQYYLVNPAA. Residues Asn-2 and Asn-15 are each glycosylated (N-linked (GlcNAc...) asparagine). A helical membrane pass occupies residues 37 to 61; that stretch reads YAALGAYMFFLILTGFPINFLTLYV. The Cytoplasmic segment spans residues 62-73; sequence TLEHKKLRTALN. The chain crosses the membrane as a helical span at residues 74 to 96; sequence LILLNLAVADLFMVFGGFTTTMY. The Extracellular segment spans residues 97–110; that stretch reads TSMHGYFVLGRLGC. Cysteines 110 and 187 form a disulfide. A helical transmembrane segment spans residues 111-133; that stretch reads NVEGFFATLGGEIALWSLVVLAV. A 'Ionic lock' involved in activated form stabilization motif is present at residues 134-136; the sequence is ERW. Residues 134 to 152 are Cytoplasmic-facing; that stretch reads ERWVVVCKPISNFRFTENH. Residues 153–173 form a helical membrane-spanning segment; sequence AIMGVAFSWIMAATCAVPPLV. Topologically, residues 174–202 are extracellular; it reads GWSRYIPEGMQCSCGVDYYTRAEGFNNES. The chain crosses the membrane as a helical span at residues 203 to 224; the sequence is FVIYMFIVHFLAPLIVIFFCYG. The Cytoplasmic segment spans residues 225-252; sequence RLLCAVKEAAAAQQESETTQRAEREVTR. A helical transmembrane segment spans residues 253 to 274; it reads MVIIMVIGFLTSWLPYASVAWY. Topologically, residues 275–286 are extracellular; it reads IFTHQGTEFGPL. Residues 287–308 traverse the membrane as a helical segment; that stretch reads FMTIPAFFAKSSALYNPMIYIC. Position 296 is an N6-(retinylidene)lysine (Lys-296). The Cytoplasmic portion of the chain corresponds to 309-352; the sequence is MNKQFRHCMITTLCCGKNPFEEEEGASTTKTEASSVSSSSVSPA. Residues Cys-322 and Cys-323 are each lipidated (S-palmitoyl cysteine). The segment at 331 to 352 is disordered; the sequence is EEGASTTKTEASSVSSSSVSPA. Residues 342-352 are compositionally biased toward low complexity; the sequence is SSVSSSSVSPA.

This sequence belongs to the G-protein coupled receptor 1 family. Opsin subfamily. In terms of processing, phosphorylated on some or all of the serine and threonine residues present in the C-terminal region. Post-translationally, contains one covalently linked retinal chromophore.

The protein resides in the membrane. It localises to the cell projection. Its subcellular location is the cilium. The protein localises to the photoreceptor outer segment. Functionally, photoreceptor required for image-forming vision at low light intensity. While most salt water fish species use retinal as chromophore, most freshwater fish use 3-dehydroretinal, or a mixture of retinal and 3-dehydroretinal. Light-induced isomerization of 11-cis to all-trans retinal triggers a conformational change that activates signaling via G-proteins. Subsequent receptor phosphorylation mediates displacement of the bound G-protein alpha subunit by arrestin and terminates signaling. This chain is Rhodopsin (rho), found in Pomatoschistus minutus (Sand goby).